The following is a 489-amino-acid chain: Argininosuccinate lyase (489 aa).

Residues Met1–His20 form a disordered region.

It belongs to the lyase 1 family. Argininosuccinate lyase subfamily.

It is found in the cytoplasm. It carries out the reaction 2-(N(omega)-L-arginino)succinate = fumarate + L-arginine. Its pathway is amino-acid biosynthesis; L-arginine biosynthesis; L-arginine from L-ornithine and carbamoyl phosphate: step 3/3. In Acidothermus cellulolyticus (strain ATCC 43068 / DSM 8971 / 11B), this protein is Argininosuccinate lyase.